Consider the following 199-residue polypeptide: uncharacterized protein (199 aa).

Positions 1-30 are disordered; sequence MEDAAAPGRTEGVLERQGAPPAAGQGGALV. Positions 71 to 101 form a coiled coil; it reads RANATNKLTVIAEQIQHLQEQARKVLEDAHR.

This is an uncharacterized protein from Homo sapiens (Human).